We begin with the raw amino-acid sequence, 445 residues long: UPF0210 protein LACR_1020 (445 aa).

It belongs to the UPF0210 family. Homodimer.

This Lactococcus lactis subsp. cremoris (strain SK11) protein is UPF0210 protein LACR_1020.